The following is a 615-amino-acid chain: Zinc finger protein 653 (615 aa).

4 disordered regions span residues M1–R48, R95–R117, P176–L236, and E401–G432. The Nuclear localization signal signature appears at P107 to R118. The segment covering K108–R117 has biased composition (basic residues). Over residues A193–S205 the composition is skewed to low complexity. Polar residues predominate over residues T226–L236. The segment covering A419–G432 has biased composition (acidic residues). The short motif at E445–R451 is the Nuclear localization signal element. 5 C2H2-type zinc fingers span residues F467 to H492, K498 to H522, F528 to H550, L556 to H578, and F586 to H609.

This sequence belongs to the krueppel C2H2-type zinc-finger protein family. In terms of assembly, interacts with NR5A1. In terms of tissue distribution, highly expressed in testis, cerebellum, temporal lobe, hippocampus and the adrenal gland. Moderately expressed in spleen, uterus, thymus, pancreas, kidney, stomach and rectum.

The protein localises to the nucleus. Functionally, transcriptional repressor. May repress NR5A1, PPARG, NR1H3, NR4A2, ESR1 and NR3C1 transcriptional activity. The polypeptide is Zinc finger protein 653 (ZNF653) (Homo sapiens (Human)).